Consider the following 589-residue polypeptide: Chromodomain Y-like protein (589 aa).

The segment covering 1–10 (MGLGSSQPST) has biased composition (polar residues). The disordered stretch occupies residues 1-57 (MGLGSSQPSTKEAEPCTLQEKEEHPVDDTRQQNNAVPATVSDPDQVSPAVQDAETQV). The span at 11–30 (KEAEPCTLQEKEEHPVDDTR) shows a compositional bias: basic and acidic residues. The region spanning 55 to 115 (TQVESIVDKR…RHNERQKEGT (61 aa)) is the Chromo domain. Residues 55 to 300 (TQVESIVDKR…TIQTSVTGVT (246 aa)) are interaction with EZH2. Ser82 is subject to Phosphoserine. Positions 110 to 155 (RQKEGTLARANRASPSNARKQISRSTHSALSKTNPKALVVGKDHES) are disordered. The span at 117–128 (ARANRASPSNAR) shows a compositional bias: low complexity. Residue Lys129 is modified to N6,N6,N6-trimethyllysine; by EHMT2; alternate. Lys129 bears the N6,N6-dimethyllysine; by EHMT2; alternate mark. Lys129 bears the N6-methyllysine; by EHMT2; alternate mark. Over residues 132–143 (SRSTHSALSKTN) the composition is skewed to polar residues. Ser164, Ser195, and Ser210 each carry phosphoserine. The segment at 202–224 (SIDGFHGESPEKLDQGAEDTVTP) is disordered. Basic and acidic residues predominate over residues 206-216 (FHGESPEKLDQ). Residues 353–585 (SENNSLNPEV…DSMLKYLQRK (233 aa)) form an acetyl-CoA-binding domain region.

As to quaternary structure, forms multimers and multimerization is required for stable binding to chromatin. Interacts with HDAC1 and HDAC2 via its C-terminal acetyl-CoA-binding domain. Interacts with EZH2, EED, SUZ12, REST, EHMT1 and EHMT2. Part of a complex containing at least CDYL, REST, WIZ, SETB1, EHMT1 and EHMT2. Part of a complex containing at least CDYL, MIER1, MIER2, HDAC1 and HDAC2. Interacts with CHAF1A and CHAF1B; bridging the CAF-1 complex to the MCM2-7 (MCM) complex. Interacts with MCM3 and MCM5; bridging the CAF-1 complex to the MCM2-7 (MCM) complex. Recruited to Xist RNA-coated X chromosome. Interacts with EHMT2 and PRDM9; interaction only takes place when PRDM9 is bound to hotspot DNA. In terms of tissue distribution, expressed in the brain, with expression in the hippocampal dentate gyrus, CA1, striatum and cortex (at protein level). Expressed in the prelimbic cortex.

It localises to the nucleus. It is found in the chromosome. The enzyme catalyses 3-hydroxybutanoyl-CoA = (2E)-butenoyl-CoA + H2O. Functionally, chromatin reader protein that recognizes and binds histone H3 trimethylated at 'Lys-9', dimethylated at 'Lys-27' and trimethylated at 'Lys-27' (H3K9me3, H3K27me2 and H3K27me3, respectively). Part of multimeric repressive chromatin complexes, where it is required for transmission and restoration of repressive histone marks, thereby preserving the epigenetic landscape. Required for chromatin targeting and maximal enzymatic activity of Polycomb repressive complex 2 (PRC2); acts as a positive regulator of PRC2 activity by bridging the pre-existing histone H3K27me3 and newly recruited PRC2 on neighboring nucleosomes. Acts as a corepressor for REST by facilitating histone-lysine N-methyltransferase EHMT2 recruitment and H3K9 dimethylation at REST target genes for repression. Involved in X chromosome inactivation in females: recruited to Xist RNA-coated X chromosome and facilitates propagation of H3K9me2 by anchoring EHMT2. Promotes EZH2 accumulation and H3K27me3 methylation at DNA double strand breaks (DSBs), thereby facilitating transcriptional repression at sites of DNA damage and homology-directed repair of DSBs. Required for neuronal migration during brain development by repressing expression of RHOA. By repressing the expression of SCN8A, contributes to the inhibition of intrinsic neuronal excitability and epileptogenesis. In addition to acting as a chromatin reader, acts as a hydro-lyase. Shows crotonyl-coA hydratase activity by mediating the conversion of crotonyl-CoA ((2E)-butenoyl-CoA) to beta-hydroxybutyryl-CoA (3-hydroxybutanoyl-CoA), thereby acting as a negative regulator of histone crotonylation. Histone crotonylation is required during spermatogenesis; down-regulation of histone crotonylation by CDYL regulates the reactivation of sex chromosome-linked genes in round spermatids and histone replacement in elongating spermatids. By regulating histone crotonylation and trimethylation of H3K27, may be involved in stress-induced depression-like behaviors, possibly by regulating VGF expression. Displays acetyltransferase activity toward tubulin in vitro; such activity is however unsure in vivo and additional evidences would be required to confirm this result. In terms of biological role, not able to recognize and bind histone H3K9me3, histone H3K27me2 and histone H3K27me3, due to the presence of a N-terminal extension that inactivates the chromo domain. The sequence is that of Chromodomain Y-like protein from Rattus norvegicus (Rat).